We begin with the raw amino-acid sequence, 30 residues long: Alanine carboxypeptidase (30 aa).

The catalysed reaction is Release of a C-terminal alanine from a peptide or a variety of pteroyl or acyl groups.. The chain is Alanine carboxypeptidase from Geobacillus stearothermophilus (Bacillus stearothermophilus).